An 844-amino-acid chain; its full sequence is Probable serine/threonine-protein kinase DDB_G0267566 (844 aa).

ANK repeat units follow at residues Lys-335–Ile-367 and Lys-371–Leu-400. The Protein kinase domain maps to Ser-508–Val-773. ATP is bound by residues Ile-514 to Val-522 and Lys-539. Catalysis depends on Asp-634, which acts as the Proton acceptor.

Belongs to the protein kinase superfamily. Ser/Thr protein kinase family.

The enzyme catalyses L-seryl-[protein] + ATP = O-phospho-L-seryl-[protein] + ADP + H(+). The catalysed reaction is L-threonyl-[protein] + ATP = O-phospho-L-threonyl-[protein] + ADP + H(+). This is Probable serine/threonine-protein kinase DDB_G0267566 from Dictyostelium discoideum (Social amoeba).